The following is a 156-amino-acid chain: Envelope glycoprotein L (156 aa).

A signal peptide spans 1-16 (MSPLVAVLVFFSAALG). Residues 21–141 (GVAGNPHGLD…KELGEVAVHK (121 aa)) form an interaction with gH region. The 107-residue stretch at 50–156 (ELEWDDEDHP…LRYNGGPPAE (107 aa)) folds into the gL alphaherpesvirus-type domain. C71 and C95 are oxidised to a cystine.

The protein belongs to the herpesviridae glycoprotein L (gL) family. Alphaherpesvirinae gL subfamily. In terms of assembly, interacts with glycoprotein H (gH); this interaction is necessary for the correct processing and cell surface expression of gH. The heterodimer gH/gL seems to interact with gB trimers during fusion. In terms of processing, O-glycosylated, and sialylated.

The protein localises to the virion membrane. The protein resides in the host cell membrane. It is found in the host Golgi apparatus. It localises to the host trans-Golgi network. The heterodimer glycoprotein H-glycoprotein L is required for the fusion of viral and plasma membranes leading to virus entry into the host cell. Acts as a functional inhibitor of gH and maintains gH in an inhibited form. Upon binding to host integrins, gL dissociates from gH leading to activation of the viral fusion glycoproteins gB and gH. The chain is Envelope glycoprotein L from Sus scrofa (Pig).